The primary structure comprises 231 residues: Potassium/proton antiporter CemA (231 aa).

The next 3 membrane-spanning stretches (helical) occupy residues 9-29, 116-136, and 191-211; these read FIPL…SFLF, IICF…LIIL, and IISG…KYWI.

Belongs to the CemA family.

It localises to the plastid. The protein resides in the chloroplast inner membrane. It catalyses the reaction K(+)(in) + H(+)(out) = K(+)(out) + H(+)(in). Contributes to K(+)/H(+) antiport activity by supporting proton efflux to control proton extrusion and homeostasis in chloroplasts in a light-dependent manner to modulate photosynthesis. Prevents excessive induction of non-photochemical quenching (NPQ) under continuous-light conditions. Indirectly promotes efficient inorganic carbon uptake into chloroplasts. The chain is Potassium/proton antiporter CemA from Manihot esculenta (Cassava).